A 372-amino-acid polypeptide reads, in one-letter code: Steroid C26-monooxygenase (372 aa).

Position 314 (cysteine 314) interacts with heme.

Belongs to the cytochrome P450 family. Requires heme as cofactor.

It catalyses the reaction cholest-4-en-3-one + 6 reduced [2Fe-2S]-[ferredoxin] + 3 O2 + 5 H(+) = (25R)-3-oxocholest-4-en-26-oate + 6 oxidized [2Fe-2S]-[ferredoxin] + 4 H2O. Its pathway is steroid metabolism; cholesterol degradation. In terms of biological role, involved in the utilization of cholesterol as the sole carbon and energy source by degrading the side chain during infection. Primarily catalyzes the sequential oxidation of the terminal methyl of cholest-4-en-3-one into (25R)-26-hydroxycholest-4-en-3-one (alcohol), (25R)-26-oxocholest-4-en-3-one (aldehyde), to finally yield the carboxylic acid (25R)-3-oxocholest-4-en-26-oate. Also able to sequentially oxidize cholesterol itself, not only cholest-4-en-3-one. In Mycobacterium tuberculosis (strain CDC 1551 / Oshkosh), this protein is Steroid C26-monooxygenase (cyp142).